Reading from the N-terminus, the 121-residue chain is Small ribosomal subunit protein uS13 (121 aa).

Residues 93 to 121 (RNLPVRGQRTRTNARTCKGPRKSMNKQFK) are disordered. Basic residues predominate over residues 110–121 (KGPRKSMNKQFK).

Belongs to the universal ribosomal protein uS13 family. As to quaternary structure, part of the 30S ribosomal subunit. Forms a loose heterodimer with protein S19. Forms two bridges to the 50S subunit in the 70S ribosome.

Its function is as follows. Located at the top of the head of the 30S subunit, it contacts several helices of the 16S rRNA. In the 70S ribosome it contacts the 23S rRNA (bridge B1a) and protein L5 of the 50S subunit (bridge B1b), connecting the 2 subunits; these bridges are implicated in subunit movement. Contacts the tRNAs in the A and P-sites. This Blochmanniella pennsylvanica (strain BPEN) protein is Small ribosomal subunit protein uS13.